The sequence spans 61 residues: Small ribosomal subunit protein uS14 (61 aa).

Residues C24, C27, C40, and C43 each contribute to the Zn(2+) site.

The protein belongs to the universal ribosomal protein uS14 family. Zinc-binding uS14 subfamily. Part of the 30S ribosomal subunit. Contacts proteins S3 and S10. It depends on Zn(2+) as a cofactor.

In terms of biological role, binds 16S rRNA, required for the assembly of 30S particles and may also be responsible for determining the conformation of the 16S rRNA at the A site. This is Small ribosomal subunit protein uS14 from Campylobacter hominis (strain ATCC BAA-381 / DSM 21671 / CCUG 45161 / LMG 19568 / NCTC 13146 / CH001A).